We begin with the raw amino-acid sequence, 164 residues long: Nucleotide-binding protein Daro_3028 (164 aa).

This sequence belongs to the YajQ family.

Nucleotide-binding protein. In Dechloromonas aromatica (strain RCB), this protein is Nucleotide-binding protein Daro_3028.